A 217-amino-acid polypeptide reads, in one-letter code: Cytidylate kinase (217 aa).

Residue 11 to 19 coordinates ATP; that stretch reads GPAGAGKST.

Belongs to the cytidylate kinase family. Type 1 subfamily.

The protein resides in the cytoplasm. The enzyme catalyses CMP + ATP = CDP + ADP. It carries out the reaction dCMP + ATP = dCDP + ADP. This chain is Cytidylate kinase, found in Clostridium perfringens (strain SM101 / Type A).